The primary structure comprises 231 residues: Large ribosomal subunit protein uL1 (231 aa).

This sequence belongs to the universal ribosomal protein uL1 family. Part of the 50S ribosomal subunit.

Binds directly to 23S rRNA. The L1 stalk is quite mobile in the ribosome, and is involved in E site tRNA release. Functionally, protein L1 is also a translational repressor protein, it controls the translation of the L11 operon by binding to its mRNA. The sequence is that of Large ribosomal subunit protein uL1 from Mycoplasmopsis agalactiae (strain NCTC 10123 / CIP 59.7 / PG2) (Mycoplasma agalactiae).